The chain runs to 353 residues: Deoxyribonuclease-2-alpha (353 aa).

The N-terminal stretch at 1 to 19 (MATLRSLLLAALLWVPAEA) is a signal peptide. Cys-22 and Cys-161 are disulfide-bonded. Residues Asn-71, Asn-88, Asn-214, and Asn-268 are each glycosylated (N-linked (GlcNAc...) asparagine). Cystine bridges form between Cys-269–Cys-349 and Cys-310–Cys-329. Residue His-297 is part of the active site.

Belongs to the DNase II family. Highly expressed in fetal liver macrophages.

Its subcellular location is the lysosome. The enzyme catalyses Endonucleolytic cleavage to nucleoside 3'-phosphates and 3'-phosphooligonucleotide end-products.. In terms of biological role, hydrolyzes DNA under acidic conditions with a preference for double-stranded DNA. Plays a major role in the clearance of nucleic acids generated through apoptosis, hence preventing autoinflammation. Necessary for proper fetal development and for definitive erythropoiesis in fetal liver and bone marrow, where it degrades nuclear DNA expelled from erythroid precursor cells. The sequence is that of Deoxyribonuclease-2-alpha (Dnase2) from Mus musculus (Mouse).